The following is a 793-amino-acid chain: MADAWEEIRRLAADFQRAQFAESTQRLSERNCIEIVNKLISQKQLEVVHTLDGKEYITPAQISKEMRDELHVRGGRVNIVDLQQVINVDLTHIENRVGDIIKSEKHVQMVLGQLVDENYLDRLSEEVNDKLQESGQVTVSELCKTYDLPGDFLTQALTQRLGRIINGHLDLDNRGVIFTEAFVARHKARIRGLFSAITRPTAVNSLVSKYGFQEQLLYSVLEELVSTGRLRGTVVGGRQDKAVFVPDIYSRTQSTWVDSFFRQNGYLEFDALSRLGIPDAVNYIKKRYKNTPLLFLKATCVGQGLVDQVEASVEEAISSGTWVDVSPLLPSSLSVEDAAMLLQQVMRPFGKHASATVFSDTVVVSEKFINDCTKLFSERMHQKAEKEMKNNPVHLITEEDLKQISILESVNTNKKDKKDERRKKATEGSGSVRGGGGGNAREYKIKKVKKKGRKDEDSDDESQSSHAGKKKPDITFMFQDEIEGCLRKHIPDAPEEFISELAEHLIKPLNKMYLEVVRSVFMSSTSASGTGRKRTIKDLQEEVSNLYNNIRLFEKGMKYFADDTQTALTKHLLKTVCTDITNLMFNFLASDLMMAVEDPATITSDMRKKILSKLTEETKVALTKLHNSLNEKSIEDFLSCLDSATEACDIMVKKGDKKRERQILFQHRQALADQLKVTEDPALILHLTSVLLFQFSTHSMLHAPGRCVPQIIAFLHNKIPEDQHTLLVKYQGLVVKQLVSQNKKSGQGEDPSSDDLDKEQHDVTNTTRKELQELSLSIKDLVLKPRKSSVTEE.

Ala2 is modified (N-acetylalanine). Positions 2–200 (ADAWEEIRRL…RGLFSAITRP (199 aa)) are mediates interaction with DDRGK1. A required for E3 UFM1-protein ligase activity region spans residues 2-212 (ADAWEEIRRL…VNSLVSKYGF (211 aa)). Residues 121-250 (DRLSEEVNDK…KAVFVPDIYS (130 aa)) form an involved in CDK5RAP3-binding region. The mediates interaction with TRIP4 stretch occupies residues 200–400 (PTAVNSLVSK…NPVHLITEED (201 aa)). The segment at 410–473 (VNTNKKDKKD…SSHAGKKKPD (64 aa)) is disordered. Omega-N-methylarginine is present on Arg433. Ser458 and Ser462 each carry phosphoserine. The mediates interaction with CDK5RAP3 stretch occupies residues 490 to 683 (IPDAPEEFIS…QLKVTEDPAL (194 aa)). Thr535 is subject to Phosphothreonine. The disordered stretch occupies residues 742 to 769 (NKKSGQGEDPSSDDLDKEQHDVTNTTRK). Ser752 and Ser753 each carry phosphoserine. Over residues 758–769 (KEQHDVTNTTRK) the composition is skewed to basic and acidic residues.

It belongs to the UFL1 family. Catalytic component of the UFM1 ribosome E3 ligase (UREL) complex, composed of UFL1, DDRGK1 and CDK5RAP3. Interacts with E2-like enzyme UFC1. Interacts with RELA. Interacts with NBN; promoting recruitment to double-strand breaks following DNA damage. Interacts (when phosphorylated) with YWHAG/14-3-3-gamma; sequestering UFL1 and preventing its association with PDCD1/PD-1 substrate. Ubiquitinated, leading to its degradation by the proteasome. Interaction with CDK5RAP3 protects both proteins against ubiquitination and degradation via the proteasome. Post-translationally, phosphorylated at Ser-462 by ATM, enhancing protein ligase activity and promoting ATM activation in a positive feedback loop. Phosphorylation at Thr-535 by AMPK promotes its interaction with YWHAG/14-3-3-gamma, thereby preventing UFL1 association with PDCD1/PD-1 substrate. As to expression, ubiquitously expressed with expression detected in brain, skeletal muscle, lung, heart, gall bladder, liver, small intestine, pancreas, spleen and kidney (at protein level). At 8 weeks after birth, high expression in the Purkinje cell layer of the cerebellum.

The protein localises to the endoplasmic reticulum membrane. It localises to the cytoplasm. The protein resides in the cytosol. It is found in the nucleus. Its subcellular location is the chromosome. Functionally, E3 protein ligase that mediates ufmylation, the covalent attachment of the ubiquitin-like modifier UFM1 to lysine residues on target proteins, and which plays a key role in various processes, such as ribosome recycling, response to DNA damage, interferon response or reticulophagy (also called ER-phagy). Catalyzes ufmylation of many protein, such as CD274/PD-L1, CDK5RAP3, CYB5R3, DDRGK1, EIF6, histone H4, MRE11, P4HB, PDCD1/PD-1, TRIP4, RPN1, RPS20/uS10, RPL10/uL16, RPL26/uL24, SYVN1/HRD1 and TP53/p53. As part of the UREL complex, plays a key role in ribosome recycling by catalyzing mono-ufmylation of RPL26/uL24 subunit of the 60S ribosome. Ufmylation of RPL26/uL24 occurs on free 60S ribosomes following ribosome dissociation: it weakens the junction between post-termination 60S subunits and SEC61 translocons, promoting release and recycling of the large ribosomal subunit from the endoplasmic reticulum membrane. Ufmylation of RPL26/uL24 and subsequent 60S ribosome recycling either take place after normal termination of translation or after ribosome stalling during cotranslational translocation at the endoplasmic reticulum. Involved in reticulophagy in response to endoplasmic reticulum stress by mediating ufmylation of proteins such as CYB5R3 and RPN1, thereby promoting lysosomal degradation of ufmylated proteins. Ufmylation in response to endoplasmic reticulum stress is essential for processes such as hematopoiesis, blood vessel morphogenesis or inflammatory response. Mediates ufmylation of DDRGK1 and CDK5RAP3; the role of these modifications is however unclear: as both DDRGK1 and CDK5RAP3 act as substrate adapters for ufmylation, it is uncertain whether ufmylation of these proteins is, a collateral effect or is required for ufmylation. Acts as a negative regulator of T-cell activation by mediating ufmylation and stabilization of PDCD1/PD-1. Also involved in the response to DNA damage: recruited to double-strand break sites following DNA damage and mediates monoufmylation of histone H4 and ufmylation of MRE11. Mediates ufmylation of TP53/p53, promoting its stability. Catalyzes ufmylation of TRIP4, thereby playing a role in nuclear receptor-mediated transcription. Required for hematopoietic stem cell function and hematopoiesis. The protein is E3 UFM1-protein ligase 1 of Rattus norvegicus (Rat).